The sequence spans 87 residues: Cell division topological specificity factor (87 aa).

This sequence belongs to the MinE family.

Prevents the cell division inhibition by proteins MinC and MinD at internal division sites while permitting inhibition at polar sites. This ensures cell division at the proper site by restricting the formation of a division septum at the midpoint of the long axis of the cell. This is Cell division topological specificity factor from Aliivibrio fischeri (strain ATCC 700601 / ES114) (Vibrio fischeri).